Here is a 287-residue protein sequence, read N- to C-terminus: 4-hydroxybenzoate octaprenyltransferase (287 aa).

6 helical membrane passes run 41–61, 89–109, 133–153, 158–178, 202–224, and 267–287; these read WPLL…GCAM, WEAI…ILPL, FFAI…PMAF, DTVP…SVAY, FGRF…YVWI, and NNWL…LAGS.

The protein belongs to the UbiA prenyltransferase family. The cofactor is Mg(2+).

Its subcellular location is the cell inner membrane. The catalysed reaction is all-trans-octaprenyl diphosphate + 4-hydroxybenzoate = 4-hydroxy-3-(all-trans-octaprenyl)benzoate + diphosphate. Its pathway is cofactor biosynthesis; ubiquinone biosynthesis. Its function is as follows. Catalyzes the prenylation of para-hydroxybenzoate (PHB) with an all-trans polyprenyl group. Mediates the second step in the final reaction sequence of ubiquinone-8 (UQ-8) biosynthesis, which is the condensation of the polyisoprenoid side chain with PHB, generating the first membrane-bound Q intermediate 3-octaprenyl-4-hydroxybenzoate. In Burkholderia lata (strain ATCC 17760 / DSM 23089 / LMG 22485 / NCIMB 9086 / R18194 / 383), this protein is 4-hydroxybenzoate octaprenyltransferase.